The sequence spans 129 residues: MGRMASPLRSKSSAPRVESTRHKETSTVRVETSSHREETSSHRVETSSRQVRTSSRQVETSQRHREGPSLTPSTKRLPQFLEVSSQHVETSSQCTETSSRHVRASSSLRVETTVHRVESPARQSARMAR.

The interval 1–129 (MGRMASPLRS…PARQSARMAR (129 aa)) is disordered. Residues 18–46 (ESTRHKETSTVRVETSSHREETSSHRVET) show a composition bias toward basic and acidic residues. Residues 47–59 (SSRQVRTSSRQVE) are compositionally biased toward low complexity. The span at 70–97 (LTPSTKRLPQFLEVSSQHVETSSQCTET) shows a compositional bias: polar residues.

This is an uncharacterized protein from Mus musculus (Mouse).